Reading from the N-terminus, the 200-residue chain is Pyridoxamine 5'-phosphate oxidase homolog (200 aa).

FMN contacts are provided by F60, K68, and N125.

It belongs to the pyridoxamine 5'-phosphate oxidase family. FMN serves as cofactor.

The protein resides in the cytoplasm. The protein localises to the nucleus. This is Pyridoxamine 5'-phosphate oxidase homolog from Saccharomyces cerevisiae (strain ATCC 204508 / S288c) (Baker's yeast).